The primary structure comprises 50 residues: Mast cell degranulating peptide (50 aa).

The signal sequence occupies residues methionine 1–serine 27. Lysine 29 carries the post-translational modification N6-formyllysine. A disulfide bond links cysteine 30 and cysteine 42. N6-formyllysine occurs at positions 44 and 48. At asparagine 49 the chain carries Asparagine amide.

In terms of tissue distribution, expressed by the venom gland.

The protein resides in the secreted. In terms of biological role, potent anti-inflammatory agent. At low concentrations, mediates the degranulation of mast cells thus evoking an inflammatory response. Also acts as a neurotoxin capable of blocking a class of voltage-gated potassium channels. This Apis cerana cerana (Oriental honeybee) protein is Mast cell degranulating peptide.